We begin with the raw amino-acid sequence, 212 residues long: Uracil phosphoribosyltransferase (212 aa).

5-phospho-alpha-D-ribose 1-diphosphate contacts are provided by residues R78, R103, and D130 to S138. Uracil-binding positions include I193 and G198 to A200. D199 is a binding site for 5-phospho-alpha-D-ribose 1-diphosphate.

Belongs to the UPRTase family. Mg(2+) is required as a cofactor.

It catalyses the reaction UMP + diphosphate = 5-phospho-alpha-D-ribose 1-diphosphate + uracil. It functions in the pathway pyrimidine metabolism; UMP biosynthesis via salvage pathway; UMP from uracil: step 1/1. With respect to regulation, allosterically activated by GTP. Functionally, catalyzes the conversion of uracil and 5-phospho-alpha-D-ribose 1-diphosphate (PRPP) to UMP and diphosphate. This Pseudomonas savastanoi pv. phaseolicola (strain 1448A / Race 6) (Pseudomonas syringae pv. phaseolicola (strain 1448A / Race 6)) protein is Uracil phosphoribosyltransferase.